The following is a 483-amino-acid chain: Glucose-1-phosphate adenylyltransferase large subunit 3, chloroplastic/amyloplastic (483 aa).

Belongs to the bacterial/plant glucose-1-phosphate adenylyltransferase family. As to quaternary structure, heterotetramer. Tubers.

It localises to the plastid. The protein localises to the chloroplast. It is found in the amyloplast. It carries out the reaction alpha-D-glucose 1-phosphate + ATP + H(+) = ADP-alpha-D-glucose + diphosphate. Its pathway is glycan biosynthesis; starch biosynthesis. Activated by 3'phosphoglycerate, inhibited by orthophosphate. Allosteric regulation. Its function is as follows. This protein plays a role in synthesis of starch. It catalyzes the synthesis of the activated glycosyl donor, ADP-glucose from Glc-1-P and ATP. The polypeptide is Glucose-1-phosphate adenylyltransferase large subunit 3, chloroplastic/amyloplastic (AGPS3) (Solanum tuberosum (Potato)).